Here is a 212-residue protein sequence, read N- to C-terminus: Protein GET1 (212 aa).

At 1–4 (MASL) the chain is on the lumenal side. Residues 5–24 (LLFVLVIQIITYLINTIGAR) traverse the membrane as a helical segment. At 25–110 (TIDSLLWLLY…SFDWTIKTVR (86 aa)) the chain is on the cytoplasmic side. Residues 75-99 (AKLRRRHDKAMEEYDVKNKKLSALK) are a coiled coil. The helical transmembrane segment at 111-131 (WVSTTGVTVILQFWFSKSPIF) threads the bilayer. Topologically, residues 132–155 (DLPRGWLPWQVEWILSFPRAPLGT) are lumenal. The chain crosses the membrane as a helical span at residues 156–172 (VSIQVWGGACGTVIALV). At 173 to 212 (GGAMGVAAPAFKKINQPRGEAQKMGTPRGSREQTPVRKTQ) the chain is on the cytoplasmic side. The disordered stretch occupies residues 189–212 (PRGEAQKMGTPRGSREQTPVRKTQ). Positions 201–212 (GSREQTPVRKTQ) are enriched in basic and acidic residues.

This sequence belongs to the WRB/GET1 family. Interacts with GET3.

The protein resides in the endoplasmic reticulum membrane. In terms of biological role, required for the post-translational delivery of tail-anchored (TA) proteins to the endoplasmic reticulum. Acts as a membrane receptor for soluble GET3, which recognizes and selectively binds the transmembrane domain of TA proteins in the cytosol. The chain is Protein GET1 from Arthroderma otae (strain ATCC MYA-4605 / CBS 113480) (Microsporum canis).